The chain runs to 164 residues: Protein-export protein SecB (164 aa).

The protein belongs to the SecB family. Homotetramer, a dimer of dimers. One homotetramer interacts with 1 SecA dimer.

Its subcellular location is the cytoplasm. In terms of biological role, one of the proteins required for the normal export of preproteins out of the cell cytoplasm. It is a molecular chaperone that binds to a subset of precursor proteins, maintaining them in a translocation-competent state. It also specifically binds to its receptor SecA. The polypeptide is Protein-export protein SecB (Stutzerimonas stutzeri (strain A1501) (Pseudomonas stutzeri)).